A 411-amino-acid polypeptide reads, in one-letter code: Anaerobic sulfatase-maturating enzyme homolog AslB (411 aa).

Residues 3 to 250 enclose the Radical SAM core domain; that stretch reads QQVPTRAFHV…LVAIFDHWIK (248 aa). Residues Cys-21 and Cys-25 each coordinate [4Fe-4S] cluster. Position 27 (Tyr-27) interacts with S-adenosyl-L-methionine. Residue Cys-28 participates in [4Fe-4S] cluster binding. S-adenosyl-L-methionine is bound by residues Gly-74, Ser-129, and Arg-141. [4Fe-4S] cluster-binding residues include Cys-276, Cys-282, and Cys-297. Asp-298 functions as the Proton acceptor in the catalytic mechanism. 5 residues coordinate [4Fe-4S] cluster: Cys-339, Cys-342, Cys-348, Cys-352, and Cys-371.

This sequence belongs to the radical SAM superfamily. Anaerobic sulfatase-maturating enzyme family. Requires [4Fe-4S] cluster as cofactor.

This chain is Anaerobic sulfatase-maturating enzyme homolog AslB (aslB), found in Escherichia coli (strain K12).